The chain runs to 419 residues: Adenylosuccinate synthetase (419 aa).

Residues 11–17 (GDEGKGK) and 39–41 (GHT) contribute to the GTP site. D12 (proton acceptor) is an active-site residue. Mg(2+) is bound by residues D12 and G39. IMP contacts are provided by residues 12 to 15 (DEGK), 37 to 40 (NAGH), T129, R143, N218, T233, and R297. The active-site Proton donor is H40. 293 to 299 (VTTGRKR) provides a ligand contact to substrate. GTP contacts are provided by residues R299, 325-327 (KLD), and 407-409 (GTG).

This sequence belongs to the adenylosuccinate synthetase family. In terms of assembly, homodimer. It depends on Mg(2+) as a cofactor.

The protein localises to the cytoplasm. The catalysed reaction is IMP + L-aspartate + GTP = N(6)-(1,2-dicarboxyethyl)-AMP + GDP + phosphate + 2 H(+). It participates in purine metabolism; AMP biosynthesis via de novo pathway; AMP from IMP: step 1/2. Functionally, plays an important role in the de novo pathway and in the salvage pathway of purine nucleotide biosynthesis. Catalyzes the first committed step in the biosynthesis of AMP from IMP. In Coccidioides posadasii (strain C735) (Valley fever fungus), this protein is Adenylosuccinate synthetase.